Consider the following 367-residue polypeptide: DNA replication and repair protein RecF (367 aa).

30-37 is a binding site for ATP; the sequence is GSNGSGKT.

It belongs to the RecF family.

The protein resides in the cytoplasm. The RecF protein is involved in DNA metabolism; it is required for DNA replication and normal SOS inducibility. RecF binds preferentially to single-stranded, linear DNA. It also seems to bind ATP. The chain is DNA replication and repair protein RecF from Pseudomonas putida (strain ATCC 700007 / DSM 6899 / JCM 31910 / BCRC 17059 / LMG 24140 / F1).